Reading from the N-terminus, the 576-residue chain is Arginine--tRNA ligase (576 aa).

The 'HIGH' region motif lies at 122 to 132; sequence PNVAKEMHVGH.

It belongs to the class-I aminoacyl-tRNA synthetase family. In terms of assembly, monomer.

It localises to the cytoplasm. The catalysed reaction is tRNA(Arg) + L-arginine + ATP = L-arginyl-tRNA(Arg) + AMP + diphosphate. This Pectobacterium carotovorum subsp. carotovorum (strain PC1) protein is Arginine--tRNA ligase.